The primary structure comprises 295 residues: Bifunctional protein FolD (295 aa).

NADP(+) is bound by residues 172–174, S197, and I238; that span reads GRS.

It belongs to the tetrahydrofolate dehydrogenase/cyclohydrolase family. As to quaternary structure, homodimer.

It carries out the reaction (6R)-5,10-methylene-5,6,7,8-tetrahydrofolate + NADP(+) = (6R)-5,10-methenyltetrahydrofolate + NADPH. The catalysed reaction is (6R)-5,10-methenyltetrahydrofolate + H2O = (6R)-10-formyltetrahydrofolate + H(+). It functions in the pathway one-carbon metabolism; tetrahydrofolate interconversion. In terms of biological role, catalyzes the oxidation of 5,10-methylenetetrahydrofolate to 5,10-methenyltetrahydrofolate and then the hydrolysis of 5,10-methenyltetrahydrofolate to 10-formyltetrahydrofolate. In Rickettsia akari (strain Hartford), this protein is Bifunctional protein FolD.